A 563-amino-acid polypeptide reads, in one-letter code: Membrane protein insertase YidC (563 aa).

The helical transmembrane segment at 6–26 (TVLWMIFSFSLLLLWNNWQIH) threads the bilayer. A disordered region spans residues 36–70 (PAPEAAATQQPKADANGTAASSTASIPSSPAAAPA). Positions 54-70 (AASSTASIPSSPAAAPA) are enriched in low complexity. 4 helical membrane-spanning segments follow: residues 373–393 (WGWTIVALTVIIKAVFFPLAA), 443–463 (LPMVVQIPVFIALYWVLLASV), 482–502 (PFFILPAIMMATMFLQIKLNP), and 512–532 (VMMIMPLVFGGMMFFFPAGLV).

It belongs to the OXA1/ALB3/YidC family. Type 1 subfamily. Interacts with the Sec translocase complex via SecD. Specifically interacts with transmembrane segments of nascent integral membrane proteins during membrane integration.

The protein localises to the cell inner membrane. Functionally, required for the insertion and/or proper folding and/or complex formation of integral membrane proteins into the membrane. Involved in integration of membrane proteins that insert both dependently and independently of the Sec translocase complex, as well as at least some lipoproteins. Aids folding of multispanning membrane proteins. This Bordetella parapertussis (strain 12822 / ATCC BAA-587 / NCTC 13253) protein is Membrane protein insertase YidC.